Here is a 297-residue protein sequence, read N- to C-terminus: MENLLSTVNAILITGPTASGKSALAVELAKRHDGAVVNADSMQVYDTLRVLTARPSKEEMQGVPHHLYGHVPAGAAYSTGAWLRDVSALLPALRDAGRLPVFVGGTGLYFKALTGGLSDMPEIPETLREKLRTRLLQEGPDGLHAELAVADPAMAASLNRQDGQRIVRALEVMKATGRSIADFQGRSGPVIIDAAEARKIVVLPDRAVLHQRINGRFEKMLQQGAEDEVRALLALDMPAEAPVMKAIGVSQIVAMLRGEMTRGEVLEKGAAATRQYAKRQMTWFRNQMDDSWERLTV.

Residue 15–22 (GPTASGKS) coordinates ATP. 17 to 22 (TASGKS) contacts substrate. Interaction with substrate tRNA regions lie at residues 40 to 43 (DSMQ) and 164 to 168 (QRIVR).

This sequence belongs to the IPP transferase family. As to quaternary structure, monomer. Requires Mg(2+) as cofactor.

The catalysed reaction is adenosine(37) in tRNA + dimethylallyl diphosphate = N(6)-dimethylallyladenosine(37) in tRNA + diphosphate. Its function is as follows. Catalyzes the transfer of a dimethylallyl group onto the adenine at position 37 in tRNAs that read codons beginning with uridine, leading to the formation of N6-(dimethylallyl)adenosine (i(6)A). The polypeptide is tRNA dimethylallyltransferase (Rhizobium johnstonii (strain DSM 114642 / LMG 32736 / 3841) (Rhizobium leguminosarum bv. viciae)).